The following is a 160-amino-acid chain: S-ribosylhomocysteine lyase (160 aa).

Residues His57, His61, and Cys127 each contribute to the Fe cation site.

The protein belongs to the LuxS family. As to quaternary structure, homodimer. Requires Fe cation as cofactor.

It carries out the reaction S-(5-deoxy-D-ribos-5-yl)-L-homocysteine = (S)-4,5-dihydroxypentane-2,3-dione + L-homocysteine. In terms of biological role, involved in the synthesis of autoinducer 2 (AI-2) which is secreted by bacteria and is used to communicate both the cell density and the metabolic potential of the environment. The regulation of gene expression in response to changes in cell density is called quorum sensing. Catalyzes the transformation of S-ribosylhomocysteine (RHC) to homocysteine (HC) and 4,5-dihydroxy-2,3-pentadione (DPD). The sequence is that of S-ribosylhomocysteine lyase from Streptococcus gordonii (strain Challis / ATCC 35105 / BCRC 15272 / CH1 / DL1 / V288).